The sequence spans 233 residues: CDP-diacylglycerol--glycerol-3-phosphate 3-phosphatidyltransferase 2 (233 aa).

The disordered stretch occupies residues 1–23; the sequence is MGEEDTATVDQNSFGGGKDSLLR. The next 5 membrane-spanning stretches (helical) occupy residues 40 to 60, 71 to 91, 100 to 120, 125 to 145, and 201 to 221; these read VITL…ILVA, TATT…GYIA, FGAF…LILL, MVAV…IAII, and LPSG…SLVV.

It belongs to the CDP-alcohol phosphatidyltransferase class-I family. Mn(2+) is required as a cofactor.

It is found in the microsome membrane. The protein localises to the endoplasmic reticulum membrane. It carries out the reaction a CDP-1,2-diacyl-sn-glycerol + sn-glycerol 3-phosphate = a 1,2-diacyl-sn-glycero-3-phospho-(1'-sn-glycero-3'-phosphate) + CMP + H(+). The protein operates within phospholipid metabolism; phosphatidylglycerol biosynthesis; phosphatidylglycerol from CDP-diacylglycerol: step 1/2. Catalyzes the committed step to the synthesis of the acidic phospholipids, including phosphatidylglycerol (PG). Together with PGPS1, required for the proper embryo development by providing PG accurate levels. The polypeptide is CDP-diacylglycerol--glycerol-3-phosphate 3-phosphatidyltransferase 2 (Arabidopsis thaliana (Mouse-ear cress)).